Here is a 95-residue protein sequence, read N- to C-terminus: Co-chaperonin GroES (95 aa).

It belongs to the GroES chaperonin family. As to quaternary structure, heptamer of 7 subunits arranged in a ring. Interacts with the chaperonin GroEL.

The protein resides in the cytoplasm. In terms of biological role, together with the chaperonin GroEL, plays an essential role in assisting protein folding. The GroEL-GroES system forms a nano-cage that allows encapsulation of the non-native substrate proteins and provides a physical environment optimized to promote and accelerate protein folding. GroES binds to the apical surface of the GroEL ring, thereby capping the opening of the GroEL channel. This Chlorobaculum tepidum (strain ATCC 49652 / DSM 12025 / NBRC 103806 / TLS) (Chlorobium tepidum) protein is Co-chaperonin GroES.